Consider the following 316-residue polypeptide: MAPTLARPSLSGVQFILSSPTTTCAATSVVTRAIAARSFSTTRSARDSVSIPPDSPNYIKVPEPPQSSEVRHPFVKGHLPIPRSIFPKKGVPEKVQSGYVNRIAPKSAAELAGLPPKSKQESWRRKMAEARRQSLEAGLQGLWQRKVKRDQKQAKESKARYLANKRAAQAPERLDEVFTRATIRESTAKNTFVPLDPEAFVKAEEARIKHAEKEAMKSEARRDAVVQLYVASKNFIVDEKELEEHVNKHFTEKIHNAGLWESGRSIWDSQKNPISMRELRNEFSGFNDRVTATTSAAVKTTVRQKNVAEELTGGKL.

Residues 41–71 (TTRSARDSVSIPPDSPNYIKVPEPPQSSEVR) are disordered.

This sequence belongs to the mitochondrion-specific ribosomal protein mS26 family. Component of the mitochondrial small ribosomal subunit (mt-SSU). Mature N.crassa 74S mitochondrial ribosomes consist of a small (37S) and a large (54S) subunit. The 37S small subunit contains a 16S ribosomal RNA (16S mt-rRNA) and 32 different proteins. The 54S large subunit contains a 23S rRNA (23S mt-rRNA) and 42 different proteins.

Its subcellular location is the mitochondrion. Its function is as follows. Component of the mitochondrial ribosome (mitoribosome), a dedicated translation machinery responsible for the synthesis of mitochondrial genome-encoded proteins, including at least some of the essential transmembrane subunits of the mitochondrial respiratory chain. The mitoribosomes are attached to the mitochondrial inner membrane and translation products are cotranslationally integrated into the membrane. The polypeptide is Small ribosomal subunit protein mS26 (pet123) (Neurospora crassa (strain ATCC 24698 / 74-OR23-1A / CBS 708.71 / DSM 1257 / FGSC 987)).